A 290-amino-acid polypeptide reads, in one-letter code: Inactive tau-tubulin kinase ttbk-6 (290 aa).

A Protein kinase domain is found at 1–240 (MEDHVLKKLN…FWQVMENEKI (240 aa)). Disordered regions lie at residues 244–263 (SKFDWENEEPDMSVPPAAWE) and 268–290 (RYFQSNPLEINGPPTPAEVDFVL).

Belongs to the protein kinase superfamily. CK1 Ser/Thr protein kinase family.

This chain is Inactive tau-tubulin kinase ttbk-6, found in Caenorhabditis elegans.